The primary structure comprises 426 residues: Serine--tRNA ligase (426 aa).

233–235 (TSE) is an L-serine binding site. 264-266 (RSE) serves as a coordination point for ATP. Position 287 (glutamate 287) interacts with L-serine. 351 to 354 (EISS) is an ATP binding site. Serine 387 is a binding site for L-serine.

It belongs to the class-II aminoacyl-tRNA synthetase family. Type-1 seryl-tRNA synthetase subfamily. As to quaternary structure, homodimer. The tRNA molecule binds across the dimer.

It is found in the cytoplasm. It carries out the reaction tRNA(Ser) + L-serine + ATP = L-seryl-tRNA(Ser) + AMP + diphosphate + H(+). The catalysed reaction is tRNA(Sec) + L-serine + ATP = L-seryl-tRNA(Sec) + AMP + diphosphate + H(+). It participates in aminoacyl-tRNA biosynthesis; selenocysteinyl-tRNA(Sec) biosynthesis; L-seryl-tRNA(Sec) from L-serine and tRNA(Sec): step 1/1. Functionally, catalyzes the attachment of serine to tRNA(Ser). Is also able to aminoacylate tRNA(Sec) with serine, to form the misacylated tRNA L-seryl-tRNA(Sec), which will be further converted into selenocysteinyl-tRNA(Sec). This chain is Serine--tRNA ligase, found in Xylella fastidiosa (strain 9a5c).